Reading from the N-terminus, the 263-residue chain is 3'-5' ssDNA/RNA exonuclease TatD (263 aa).

A divalent metal cation contacts are provided by E91, H127, and H152.

Belongs to the metallo-dependent hydrolases superfamily. TatD-type hydrolase family. TatD subfamily. Monomer. Mg(2+) is required as a cofactor.

Its subcellular location is the cytoplasm. Its function is as follows. 3'-5' exonuclease that prefers single-stranded DNA and RNA. May play a role in the H(2)O(2)-induced DNA damage repair. The protein is 3'-5' ssDNA/RNA exonuclease TatD of Citrobacter rodentium (strain ICC168) (Citrobacter freundii biotype 4280).